Here is a 132-residue protein sequence, read N- to C-terminus: Small ribosomal subunit protein bS6 (132 aa).

It belongs to the bacterial ribosomal protein bS6 family.

Binds together with bS18 to 16S ribosomal RNA. The chain is Small ribosomal subunit protein bS6 from Chlorobium chlorochromatii (strain CaD3).